Consider the following 909-residue polypeptide: Tubulin polyglutamylase TTLL7 (909 aa).

In terms of domain architecture, TTL spans 40–392; it reads NGAITANVVG…RASDKKKNLA (353 aa). Residues Lys162, 168–169, 190–193, and 203–205 each bind ATP; these read MG, QEYL, and KFD. Arg229 serves as a coordination point for L-glutamate. 251 to 252 contacts ATP; the sequence is TN. Residues Tyr253, Ser254, and Lys273 each coordinate L-glutamate. Positions 338, 351, and 353 each coordinate Mg(2+). Lys369 is a binding site for L-glutamate. Positions 390–452 are c-MTBD region; the sequence is NLAKQKAEAQ…ISREEYENRH (63 aa). 2 disordered regions span residues 517–580 and 603–688; these read DEKL…KVSY and KAAR…PSIS. Positions 518 to 531 are enriched in basic and acidic residues; sequence EKLSGKPTRPKEPR. The segment covering 532–542 has biased composition (polar residues); sequence TLSSMPESTQT. A compositionally biased stretch (low complexity) spans 548-562; the sequence is NYSSHSSSNSTGSSS. Residues 571-580 are compositionally biased toward basic and acidic residues; that stretch reads KEGKEKKVSY. The segment covering 604 to 625 has biased composition (low complexity); sequence AARPFSNSSSPSSAASMRRSVS. The span at 626–657 shows a compositional bias: polar residues; sequence CPRSITALNTQSPTTDQRPFSSRISSTITRPL. Positions 658 to 673 are enriched in low complexity; sequence SGNRTNSLNRSSSSNR. A compositionally biased stretch (polar residues) spans 674–688; that stretch reads VPQSGTSGSVYPSIS.

This sequence belongs to the tubulin--tyrosine ligase family. Interacts with both alpha- and beta-tubulin (via C-terminal tubulin tails). Mg(2+) is required as a cofactor.

The protein localises to the cell projection. It localises to the cilium. Its subcellular location is the cytoplasm. It is found in the cytoskeleton. The protein resides in the cilium basal body. The protein localises to the dendrite. It localises to the perikaryon. It catalyses the reaction L-glutamyl-[protein] + L-glutamate + ATP = gamma-L-glutamyl-L-glutamyl-[protein] + ADP + phosphate + H(+). It carries out the reaction (L-glutamyl)(n)-gamma-L-glutamyl-L-glutamyl-[protein] + L-glutamate + ATP = (L-glutamyl)(n+1)-gamma-L-glutamyl-L-glutamyl-[protein] + ADP + phosphate + H(+). Functionally, polyglutamylase which modifies tubulin, generating polyglutamate side chains of variable lengths on the gamma-carboxyl group of specific glutamate residues within the C-terminal tail of tubulin. Mediates both ATP-dependent initiation and elongation steps of the polyglutamylation reaction. Preferentially modifies the beta-tubulin tail over an alpha-tail. Competes with monoglycylase TTLL3 for modification site on beta-tubulin substrate, thereby creating an anticorrelation between glycylation and glutamylation reactions. This is Tubulin polyglutamylase TTLL7 from Xenopus tropicalis (Western clawed frog).